The following is a 231-amino-acid chain: ATP-dependent dethiobiotin synthetase BioD 2 (231 aa).

13–18 (SVGKTV) lines the ATP pocket. Thr17 provides a ligand contact to Mg(2+). Lys38 is a catalytic residue. Residues Asp55, 112 to 115 (EGTG), 172 to 173 (NR), 201 to 203 (PYL), and Gln208 each bind ATP. Asp55 and Glu112 together coordinate Mg(2+).

The protein belongs to the dethiobiotin synthetase family. Homodimer. Mg(2+) is required as a cofactor.

It localises to the cytoplasm. The enzyme catalyses (7R,8S)-7,8-diammoniononanoate + CO2 + ATP = (4R,5S)-dethiobiotin + ADP + phosphate + 3 H(+). It participates in cofactor biosynthesis; biotin biosynthesis; biotin from 7,8-diaminononanoate: step 1/2. Catalyzes a mechanistically unusual reaction, the ATP-dependent insertion of CO2 between the N7 and N8 nitrogen atoms of 7,8-diaminopelargonic acid (DAPA, also called 7,8-diammoniononanoate) to form a ureido ring. This Salmonella typhimurium (strain LT2 / SGSC1412 / ATCC 700720) protein is ATP-dependent dethiobiotin synthetase BioD 2.